Consider the following 1165-residue polypeptide: Sperm-associated antigen 5 (1165 aa).

The interval 1–23 (MWRVKTLNLGLSPSPQKGKPAMS) is disordered. A phosphoserine mark is found at serine 12, serine 14, serine 66, serine 161, serine 321, serine 333, and serine 342. Residues 431–457 (TVPHREARDSSTQTDSSPCGVTKTPKH) are disordered. Polar residues predominate over residues 440 to 449 (SSTQTDSSPC). An interaction with KNSTRN region spans residues 453 to 821 (KTPKHLQDSK…LRDTVDSLRA (369 aa)). The stretch at 509–856 (RSKTLVSSCS…LLAEQLQSLT (348 aa)) forms a coiled coil. The disordered stretch occupies residues 875–907 (PSTGSAPAQEHPLSNDSSISEQTPTAAVDEVPE). Over residues 876–897 (STGSAPAQEHPLSNDSSISEQT) the composition is skewed to polar residues. Residues 937 to 1146 (DLEKSLAEMS…IQHVYETLLS (210 aa)) are a coiled coil. Serine 946 bears the Phosphoserine; by GSK3-beta mark.

As to quaternary structure, homodimer, with a globular head domain and a long stalk. Homooligomer; the globular head domains associate, resulting in aster-like structures. Binds to microtubules in the mitotic spindle. Interacts with DCLRE1B/Apollo. Part of an astrin (SPAG5)-kinastrin (SKAP) complex containing KNSTRN, SPAG5, PLK1, DYNLL1 and SGO2A. Interacts with KNSTRN. Interacts with RPTOR; this interaction competes with RPTOR binding to MTOR, resulting in decreased mTORC1 formation. Interacts with G3BP1. The complex formed with G3BP1 and RPTOR is increased by oxidative stress. Interacts with OSBPL8, PCM1 and CDK5RAP2. Interacts (via C-terminus) with NUMA1 (via C-terminus); this interaction promotes the recruitment of SPAG5 to the microtubules at spindle poles in a dynein-dynactin-dependent manner. Interacts with DYNLL1. Phosphorylated by AURKA. As to expression, detected in testis, but not in the other tissues tested.

The protein localises to the cytoplasm. Its subcellular location is the cytoskeleton. The protein resides in the spindle. It is found in the spindle pole. It localises to the chromosome. The protein localises to the centromere. Its subcellular location is the kinetochore. The protein resides in the midbody. It is found in the microtubule organizing center. It localises to the centrosome. The protein localises to the centriolar satellite. In terms of biological role, essential component of the mitotic spindle required for normal chromosome segregation and progression into anaphase. Required for chromosome alignment, normal timing of sister chromatid segregation, and maintenance of spindle pole architecture. In complex with SKAP, promotes stable microtubule-kinetochore attachments. May contribute to the regulation of separase activity. May regulate AURKA localization to mitotic spindle, but not to centrosomes and CCNB1 localization to both mitotic spindle and centrosomes. Involved in centriole duplication. Required for CDK5RAP22, CEP152, WDR62 and CEP63 centrosomal localization and promotes the centrosomal localization of CDK2. In non-mitotic cells, upon stress induction, inhibits mammalian target of rapamycin complex 1 (mTORC1) association and recruits the mTORC1 component RPTOR to stress granules (SGs), thereby preventing mTORC1 hyperactivation-induced apoptosis. May enhance GSK3B-mediated phosphorylation of other substrates, such as MAPT/TAU. The sequence is that of Sperm-associated antigen 5 (Spag5) from Mus musculus (Mouse).